A 248-amino-acid polypeptide reads, in one-letter code: Probable transcriptional regulatory protein FTL_0929 (248 aa).

Belongs to the TACO1 family.

It localises to the cytoplasm. This Francisella tularensis subsp. holarctica (strain LVS) protein is Probable transcriptional regulatory protein FTL_0929.